Reading from the N-terminus, the 29-residue chain is GFPTCGETCTLGTCNTPGCTCSWPICTRN.

Residues 1–29 constitute a cross-link (cyclopeptide (Gly-Asn)); it reads GFPTCGETCTLGTCNTPGCTCSWPICTRN. Cystine bridges form between cysteine 5/cysteine 19, cysteine 9/cysteine 21, and cysteine 14/cysteine 26.

The protein belongs to the cyclotide family. Moebius subfamily. Post-translationally, this is a cyclic peptide.

In terms of biological role, probably participates in a plant defense mechanism. This is Cyclotide mobo-A from Melicytus obovatus (Hymenanthera obovata).